The primary structure comprises 200 residues: Glycerol-3-phosphate acyltransferase (200 aa).

5 consecutive transmembrane segments (helical) span residues 8 to 28, 57 to 77, 88 to 108, 114 to 134, and 159 to 179; these read ALAL…GMVL, LAAA…VLAA, IAGL…FAGG, FLGI…LAWL, and FLLG…LIFW.

It belongs to the PlsY family. As to quaternary structure, probably interacts with PlsX.

The protein localises to the cell inner membrane. It carries out the reaction an acyl phosphate + sn-glycerol 3-phosphate = a 1-acyl-sn-glycero-3-phosphate + phosphate. The protein operates within lipid metabolism; phospholipid metabolism. Catalyzes the transfer of an acyl group from acyl-phosphate (acyl-PO(4)) to glycerol-3-phosphate (G3P) to form lysophosphatidic acid (LPA). This enzyme utilizes acyl-phosphate as fatty acyl donor, but not acyl-CoA or acyl-ACP. The chain is Glycerol-3-phosphate acyltransferase from Roseobacter denitrificans (strain ATCC 33942 / OCh 114) (Erythrobacter sp. (strain OCh 114)).